The sequence spans 378 residues: uncharacterized protein (378 aa).

In terms of domain architecture, Guanylate cyclase spans 208-317 (GIGFADLSSF…NPVNLAARLV (110 aa)).

This sequence belongs to the adenylyl cyclase class-4/guanylyl cyclase family.

This is an uncharacterized protein from Mycobacterium bovis (strain ATCC BAA-935 / AF2122/97).